Consider the following 295-residue polypeptide: Nucleotide-binding protein EF_0766 (295 aa).

Residue 12 to 19 (GMSGAGKT) coordinates ATP. 62-65 (DLRS) serves as a coordination point for GTP.

It belongs to the RapZ-like family.

In terms of biological role, displays ATPase and GTPase activities. In Enterococcus faecalis (strain ATCC 700802 / V583), this protein is Nucleotide-binding protein EF_0766.